Consider the following 663-residue polypeptide: MNKQNNYSDDSIQVLEGLEAVRKRPGMYIGSTDKRGLHHLVYEIVDNSVDEVLNGYGNEIDVTINKDGSISIEDNGRGMPTGIHKSGKPTVEVIFTVLHAGGKFGQGGYKTSGGLHGVGASVVNALSEWLEVEIHRDGSIYHQSFKNGGSPSSGLVKKGKTKKTGTKVTFKPDDTIFKASTSFNFDVLSERLQESAFLLKNLKITLNDLRSGKERQEHYHYEEGIKEFVSYVNEGKEVLHDVATFSGEANGIEVDVAFQYNDQYSESILSFVNNVRTKDGGTHEVGFKTAMTRVFNDYARRINELKTKDKNLDGNDIREGLTAVVSVRIPEELLQFEGQTKSKLGTSEARSAVDSVVADKLPFYLEEKGQLSKSLVKKAIKAQQAREAARKAREDARSGKKNKRKDTLLSGKLTPAQSKNTEKNELYLVEGDSAGGSAKLGRDRKFQAILPLRGKVINTEKARLEDIFKNEEINTIIHTIGAGVGTDFKIEDSNYNRVIIMTDADTDGAHIQVLLLTFFFKYMKPLVQAGRVFIALPPLYKLEKGKGKTKRVEYAWTDEELNKLQKELGKGFTLQRYKGLGEMNPEQLWETTMNPETRTLIRVQVEDEVRSSKRVTTLMGDKVQPRREWIEKHVEFGMQEDQSILDNSEVQVLENDQFDEEEI.

ATP contacts are provided by residues Y7, N47, D74, 114–120, and K341; that span reads GLHGVGA. Residues 386 to 416 form a disordered region; that stretch reads REAARKAREDARSGKKNKRKDTLLSGKLTPA. Residues 387–398 show a composition bias toward basic and acidic residues; sequence EAARKAREDARS. The 115-residue stretch at 424-538 folds into the Toprim domain; sequence NELYLVEGDS…AGRVFIALPP (115 aa). Mg(2+)-binding residues include E430, D503, and D505.

Belongs to the type II topoisomerase family. ParE type 2 subfamily. In terms of assembly, heterotetramer composed of ParC and ParE. The cofactor is Mg(2+). Mn(2+) is required as a cofactor. Requires Ca(2+) as cofactor.

It catalyses the reaction ATP-dependent breakage, passage and rejoining of double-stranded DNA.. Topoisomerase IV is essential for chromosome segregation. It relaxes supercoiled DNA. Performs the decatenation events required during the replication of a circular DNA molecule. This Staphylococcus aureus (strain Mu50 / ATCC 700699) protein is DNA topoisomerase 4 subunit B.